The chain runs to 36 residues: Photosystem I reaction center subunit VIII (36 aa).

Residues 7 to 29 form a helical membrane-spanning segment; it reads PSIFVPLVGLVFPAITMASLFIY.

It belongs to the PsaI family.

The protein localises to the plastid. Its subcellular location is the chloroplast thylakoid membrane. Its function is as follows. May help in the organization of the PsaL subunit. This is Photosystem I reaction center subunit VIII from Psilotum nudum (Whisk fern).